Reading from the N-terminus, the 327-residue chain is Leucotoxin LukD (327 aa).

The signal sequence occupies residues 1–26 (MKIEKLGKSSVASSIALLLLSNTVDA).

The protein belongs to the aerolysin family. Toxicity requires sequential binding and synergistic association of a class S and a class F component which form heterooligomeric complexes. LukE (class S) associates with LukD (class F). LukD can also associate with HlgA.

The protein resides in the secreted. Its function is as follows. Part of a bi-component leucotoxin that acts by forming pores in the membrane of the target cells. LukE-LukD is as effective as the Panton-Valentine leucocidin (PVL) for inducing dermonecrosis when injected in the rabbit skin, but not hemolytic and poorly leucotoxic on human blood cells compared to other leucotoxins expressed by S.aureus. HlgA-LukD is a Ca(2+) channel inducer. In Staphylococcus aureus, this protein is Leucotoxin LukD (lukD).